The chain runs to 177 residues: Putative HVA22-like protein g (177 aa).

The tract at residues 145–165 (QSTPKSKAEEKKETTIPKLDD) is disordered. Over residues 150–165 (SKAEEKKETTIPKLDD) the composition is skewed to basic and acidic residues.

The protein belongs to the DP1 family.

The polypeptide is Putative HVA22-like protein g (HVA22G) (Arabidopsis thaliana (Mouse-ear cress)).